Reading from the N-terminus, the 118-residue chain is Basic phospholipase A2 PA-12C (118 aa).

Intrachain disulfides connect C11–C71, C27–C117, C29–C45, C44–C98, C51–C91, C60–C84, and C78–C89. Ca(2+) contacts are provided by Y28, G30, and G32. The active site involves H48. D49 is a binding site for Ca(2+). The active site involves D92.

The protein belongs to the phospholipase A2 family. Group I subfamily. D49 sub-subfamily. Ca(2+) serves as cofactor. In terms of tissue distribution, expressed by the venom gland.

It localises to the secreted. The catalysed reaction is a 1,2-diacyl-sn-glycero-3-phosphocholine + H2O = a 1-acyl-sn-glycero-3-phosphocholine + a fatty acid + H(+). Its function is as follows. PLA2 catalyzes the calcium-dependent hydrolysis of the 2-acyl groups in 3-sn-phosphoglycerides. The polypeptide is Basic phospholipase A2 PA-12C (Pseudechis australis (Mulga snake)).